The sequence spans 456 residues: MADGGSERADGRIVKMEVDYSATVDQRLPECAKLAKEGRLQEVIETLLSLEKQTRTASDMVSTSRILVAVVKMCYEAKEWDLLNENIMLLSKRRSQLKQAVAKMVQQCCTYVEEITDLPIKLRLIDTLRMVTEGKIYVEIERARLTKTLATIKEQNGDVKEAASILQELQVETYGSMEKKERVEFILEQMRLCLAVKDYIRTQIISKKINTKFFQEENTEKLKLKYYNLMIQLDQHEGSYLSICKHYRAIYDTPCIQAESEKWQQALKSVVLYVILAPFDNEQSDLVHRISGDKKLEEIPKYKDLLKLFTTMELMRWSTLVEDYGMELRKGSLESPATDVFGSTEEGEKRWKDLKNRVVEHNIRIMAKYYTRITMKRMAQLLDLSVDESEAFLSNLVVNKTIFAKVDRLAGIINFQRPKDPNNLLNDWSQKLNSLMSLVNKTTHLIAKEEMIHNLQ.

At A2 the chain carries N-acetylalanine. Residue K92 forms a Glycyl lysine isopeptide (Lys-Gly) (interchain with G-Cter in SUMO1); alternate linkage. K92 is covalently cross-linked (Glycyl lysine isopeptide (Lys-Gly) (interchain with G-Cter in SUMO2); alternate). An N6-acetyllysine mark is found at K221 and K368. A PCI domain is found at S242–D420.

Belongs to the proteasome subunit p55 family. As to quaternary structure, component of the 19S proteasome regulatory particle complex. The 26S proteasome consists of a 20S core particle (CP) and two 19S regulatory subunits (RP). The regulatory particle is made of a lid composed of 9 subunits including PSMD12, a base containing 6 ATPases and few additional components. Interacts with ERCC6.

Functionally, component of the 26S proteasome, a multiprotein complex involved in the ATP-dependent degradation of ubiquitinated proteins. This complex plays a key role in the maintenance of protein homeostasis by removing misfolded or damaged proteins, which could impair cellular functions, and by removing proteins whose functions are no longer required. Therefore, the proteasome participates in numerous cellular processes, including cell cycle progression, apoptosis, or DNA damage repair. The polypeptide is 26S proteasome non-ATPase regulatory subunit 12 (PSMD12) (Homo sapiens (Human)).